A 683-amino-acid chain; its full sequence is Methionine--tRNA ligase (683 aa).

The 'HIGH' region motif lies at 15–25 (PYANGSIHLGH). 4 residues coordinate Zn(2+): cysteine 146, cysteine 149, cysteine 159, and cysteine 162. The short motif at 332–336 (KMSKS) is the 'KMSKS' region element. Residue lysine 335 coordinates ATP. Residues 582-683 (DFAKVDLRIA…QGAQAGMRVM (102 aa)) enclose the tRNA-binding domain.

This sequence belongs to the class-I aminoacyl-tRNA synthetase family. MetG type 1 subfamily. Homodimer. It depends on Zn(2+) as a cofactor.

The protein resides in the cytoplasm. It carries out the reaction tRNA(Met) + L-methionine + ATP = L-methionyl-tRNA(Met) + AMP + diphosphate. Functionally, is required not only for elongation of protein synthesis but also for the initiation of all mRNA translation through initiator tRNA(fMet) aminoacylation. The protein is Methionine--tRNA ligase of Vibrio cholerae serotype O1 (strain ATCC 39541 / Classical Ogawa 395 / O395).